We begin with the raw amino-acid sequence, 147 residues long: Hemoglobin subunit beta (147 aa).

The 145-residue stretch at 3 to 147 (HWTAEEKQLI…VAHALARKYH (145 aa)) folds into the Globin domain. Heme b-binding residues include histidine 64 and histidine 93.

Belongs to the globin family. In terms of assembly, heterotetramer of two alpha chains and two beta chains. As to expression, red blood cells.

Functionally, involved in oxygen transport from the lung to the various peripheral tissues. The chain is Hemoglobin subunit beta (HBB) from Cairina moschata (Muscovy duck).